We begin with the raw amino-acid sequence, 450 residues long: tRNA-2-methylthio-N(6)-dimethylallyladenosine synthase (450 aa).

The MTTase N-terminal domain occupies 8–124 (RTLHITTWGC…LPELIAEIEA (117 aa)). [4Fe-4S] cluster-binding residues include C17, C52, C87, C162, C166, and C169. Residues 148–380 (ASQGPIAFLA…QAVLRDQQHA (233 aa)) form the Radical SAM core domain. Residues 383–445 (RAQVGRSFEV…PNSLMASLTQ (63 aa)) form the TRAM domain.

The protein belongs to the methylthiotransferase family. MiaB subfamily. Monomer. It depends on [4Fe-4S] cluster as a cofactor.

It localises to the cytoplasm. It carries out the reaction N(6)-dimethylallyladenosine(37) in tRNA + (sulfur carrier)-SH + AH2 + 2 S-adenosyl-L-methionine = 2-methylsulfanyl-N(6)-dimethylallyladenosine(37) in tRNA + (sulfur carrier)-H + 5'-deoxyadenosine + L-methionine + A + S-adenosyl-L-homocysteine + 2 H(+). In terms of biological role, catalyzes the methylthiolation of N6-(dimethylallyl)adenosine (i(6)A), leading to the formation of 2-methylthio-N6-(dimethylallyl)adenosine (ms(2)i(6)A) at position 37 in tRNAs that read codons beginning with uridine. The protein is tRNA-2-methylthio-N(6)-dimethylallyladenosine synthase of Acidiphilium cryptum (strain JF-5).